A 503-amino-acid polypeptide reads, in one-letter code: WD repeat-containing protein 55 homolog (503 aa).

Positions 1–131 are disordered; sequence MHTHNNFKTP…DSAAFDLDDL (131 aa). 2 stretches are compositionally biased toward acidic residues: residues 12 to 23 and 37 to 56; these read DADELDDLDDDM and VGEDESDSDIDEHDLADMEA. The span at 59-76 shows a compositional bias: polar residues; it reads PNQNADENESISSDSSFD. Positions 78–96 are enriched in acidic residues; it reads NAEDSSDSDDSMLEEDEAE. WD repeat units lie at residues 157–196, 201–242, 244–282, 285–324, 327–366, and 411–450; these read KLEDFITDVCFHPDRDIIALATIIGDVHLYEYGNEGNKLL, VHSK…KLYE, AHDDAINKLHVLDENLFATGDDAGTVKLWDLRTKNPIFE, EVEDQITQMITNDQKKLLLATSADGYLTTFNIAARKLYVQ, PYEEELNCMGIYRGSSKLVVGTSKGKLYSYNWGYFGYHCD, and QHNMPIESLDINTSGELLASSSHNNDVRFWNVKYFEDFGD. Positions 483 to 503 are disordered; it reads TKEDEDNADNNDAAAGPSNSA.

The protein belongs to the WD repeat WDR55 family.

The polypeptide is WD repeat-containing protein 55 homolog (Drosophila pseudoobscura pseudoobscura (Fruit fly)).